We begin with the raw amino-acid sequence, 242 residues long: Ribonuclease PH (242 aa).

Residues Arg-89 and 127–129 (GTR) contribute to the phosphate site.

This sequence belongs to the RNase PH family. As to quaternary structure, homohexameric ring arranged as a trimer of dimers.

It catalyses the reaction tRNA(n+1) + phosphate = tRNA(n) + a ribonucleoside 5'-diphosphate. Functionally, phosphorolytic 3'-5' exoribonuclease that plays an important role in tRNA 3'-end maturation. Removes nucleotide residues following the 3'-CCA terminus of tRNAs; can also add nucleotides to the ends of RNA molecules by using nucleoside diphosphates as substrates, but this may not be physiologically important. Probably plays a role in initiation of 16S rRNA degradation (leading to ribosome degradation) during starvation. In Neisseria gonorrhoeae (strain ATCC 700825 / FA 1090), this protein is Ribonuclease PH.